The sequence spans 486 residues: Cysteine--tRNA ligase (486 aa).

C29 lines the Zn(2+) pocket. Residues 31-41 carry the 'HIGH' region motif; it reads VTVYDYCHLGH. C214, H239, and E243 together coordinate Zn(2+). Residues 271-275 carry the 'KMSKS' region motif; sequence KMSKS. K274 serves as a coordination point for ATP.

Belongs to the class-I aminoacyl-tRNA synthetase family. As to quaternary structure, monomer. The cofactor is Zn(2+).

The protein localises to the cytoplasm. The catalysed reaction is tRNA(Cys) + L-cysteine + ATP = L-cysteinyl-tRNA(Cys) + AMP + diphosphate. The chain is Cysteine--tRNA ligase from Nostoc sp. (strain PCC 7120 / SAG 25.82 / UTEX 2576).